A 692-amino-acid chain; its full sequence is Transforming growth factor beta activator LRRC33 (692 aa).

An N-terminal signal peptide occupies residues 1-24 (MEFLPLWLCLGFHFLIVEWRSGRG). The Extracellular portion of the chain corresponds to 25 to 650 (TATAASQGGC…CKWGQVDTGL (626 aa)). Positions 29-56 (ASQGGCKVVDRVADCRSLNLASVPSGLP) constitute an LRRNT domain. 10 LRR repeats span residues 58–79 (HSRMLVLDANPLRVLWNHSLQA), 82–103 (RLEDLSLHSCHLDRISHWAFHE), 106–127 (HLQNLVLADNRLSENYKESATA), 133–155 (RLRRLDLSGNSLTEDMAALMLQN), 158–179 (SLEVVSLARNTLMRLDDSVFEG), 182–203 (RLVELDLQRNYIFEIEGGAFDG), 206–227 (ELRRLNLAYNNLPCIVDFSLTQ), 228–239 (LRFLNVSYNILE), 251–272 (ELEILDLSHNQLLFFPLLPQCG), and 273–294 (KLHTLLLQDNSMGFYRELYNTS). Asn-74 carries an N-linked (GlcNAc...) asparagine glycan. N-linked (GlcNAc...) asparagine glycosylation is present at Asn-155. N-linked (GlcNAc...) asparagine glycosylation occurs at Asn-232. Asn-292, Asn-309, and Asn-312 each carry an N-linked (GlcNAc...) asparagine glycan. LRR repeat units lie at residues 329–350 (ALRFLDMSQNQLRHLPDGFLKK), 353–374 (SLSHLNLNQNCLTKLHIREHEP), 377–398 (ALTELDLSRNQLAELHLAPGLT), 403–424 (NLRVFNLSSNQLLGVPTGLFHS), 427–448 (SITTLDMSHNQISLCPQTVPLD), 463–484 (SLRSLSLDGCGLKALQDCPFQG), 486–507 (SLTHLDLSSNWGILNGSVSPLS), 512–533 (TLQVLSLRNVGLGSGAAEMDFS), 537–558 (NLRELDLSGNSLTSFPKFKGSS), 559–580 (ALQTLDLRRNSLTALPQRVVSE), and 585–605 (GLQTIYLSQNPYDCCGVEGWG). An N-linked (GlcNAc...) asparagine glycan is attached at Asn-408. Residue Asn-500 is glycosylated (N-linked (GlcNAc...) asparagine). Positions 606–643 (ALQHFKTIADLSMVTCNLSSKIIRVVELPEGIPQDCKW) constitute an LRRCT domain. Asn-622 is a glycosylation site (N-linked (GlcNAc...) asparagine). The helical transmembrane segment at 651 to 671 (FYLVLILPSCLTLLVASTVIF) threads the bilayer. The Cytoplasmic segment spans residues 672-692 (LTFKKPLLQVIKSRCHWSSIY).

The protein belongs to the LRRC32/LRRC33 family. As to quaternary structure, interacts (via LRR repeats) with TLR2, TLR3, TLR4, TLR9 and probably other Toll-like receptors. Interacts with CYBB/NOX2; the interaction is direct. Interacts with TGFB1; associates via disulfide bonds with the Latency-associated peptide chain (LAP) regulatory chain of TGFB1, leading to regulate activation of TGF-beta-1.

It localises to the cell membrane. It is found in the endoplasmic reticulum membrane. Key regulator of transforming growth factor beta-1 (TGFB1) specifically required for microglia function in the nervous system. Required for activation of latent TGF-beta-1 in macrophages and microglia: associates specifically via disulfide bonds with the Latency-associated peptide (LAP), which is the regulatory chain of TGFB1, and regulates integrin-dependent activation of TGF-beta-1. TGF-beta-1 activation mediated by LRRC33/NRROS is highly localized: there is little spreading of TGF-beta-1 activated from one microglial cell to neighboring microglia, suggesting the existence of localized and selective activation of TGF-beta-1 by LRRC33/NRROS. Indirectly plays a role in Toll-like receptor (TLR) signaling: ability to inhibit TLR-mediated NF-kappa-B activation and cytokine production is probably a consequence of its role in TGF-beta-1 signaling. This is Transforming growth factor beta activator LRRC33 from Rattus norvegicus (Rat).